The following is a 111-amino-acid chain: Large ribosomal subunit protein uL23 (111 aa).

This sequence belongs to the universal ribosomal protein uL23 family. Part of the 50S ribosomal subunit. Contacts protein L29, and trigger factor when it is bound to the ribosome.

One of the early assembly proteins it binds 23S rRNA. One of the proteins that surrounds the polypeptide exit tunnel on the outside of the ribosome. Forms the main docking site for trigger factor binding to the ribosome. This chain is Large ribosomal subunit protein uL23, found in Nitrosomonas europaea (strain ATCC 19718 / CIP 103999 / KCTC 2705 / NBRC 14298).